A 380-amino-acid polypeptide reads, in one-letter code: ATPase ASNA1 homolog (380 aa).

48–55 (KGGVGKTT) lines the ATP pocket. Residue D77 is part of the active site. ATP is bound by residues E248 and N275.

This sequence belongs to the arsA ATPase family. In terms of assembly, homodimer.

The protein resides in the cytoplasm. It is found in the endoplasmic reticulum. In terms of biological role, ATPase required for the post-translational delivery of tail-anchored (TA) proteins to the endoplasmic reticulum. Recognizes and selectively binds the transmembrane domain of TA proteins in the cytosol. This complex then targets to the endoplasmic reticulum by membrane-bound receptors, where the tail-anchored protein is released for insertion. This process is regulated by ATP binding and hydrolysis. ATP binding drives the homodimer towards the closed dimer state, facilitating recognition of newly synthesized TA membrane proteins. ATP hydrolysis is required for insertion. Subsequently, the homodimer reverts towards the open dimer state, lowering its affinity for the membrane-bound receptor, and returning it to the cytosol to initiate a new round of targeting. The chain is ATPase ASNA1 homolog from Plasmodium yoelii yoelii.